The following is a 160-amino-acid chain: Cyclic pyranopterin monophosphate synthase (160 aa).

Residues 75–77 (LCH) and 113–114 (ME) contribute to the substrate site. Asp-128 is an active-site residue.

This sequence belongs to the MoaC family. Homohexamer; trimer of dimers.

It carries out the reaction (8S)-3',8-cyclo-7,8-dihydroguanosine 5'-triphosphate = cyclic pyranopterin phosphate + diphosphate. Its pathway is cofactor biosynthesis; molybdopterin biosynthesis. In terms of biological role, catalyzes the conversion of (8S)-3',8-cyclo-7,8-dihydroguanosine 5'-triphosphate to cyclic pyranopterin monophosphate (cPMP). The sequence is that of Cyclic pyranopterin monophosphate synthase from Beijerinckia indica subsp. indica (strain ATCC 9039 / DSM 1715 / NCIMB 8712).